The sequence spans 109 residues: Mitochondrial pyruvate carrier 1 (109 aa).

A2 is subject to N-acetylalanine. Over 2–20 the chain is Mitochondrial matrix; sequence AGALVRKAADYVRSKDFRD. The helical transmembrane segment at 21-41 threads the bilayer; sequence YLMSTHFWGPVANWGLPIAAI. The Mother cell cytoplasmic segment spans residues 42–52; the sequence is NDMKKSPEIIS. Residues 53–71 form a helical membrane-spanning segment; it reads GRMTFALCCYSLTFMRFAY. Residue K72 is modified to N6-acetyllysine. Residues 72–109 lie on the Mitochondrial matrix side of the membrane; it reads KVQPRNWLLFACHATNEVAQLIQGGRLIRHEMSKKASA.

In terms of assembly, homodimer. Forms heterodimer with MPC2. The heterodimer is the more stable and dominant form.

It is found in the mitochondrion inner membrane. The enzyme catalyses pyruvate(out) + H(+)(out) = pyruvate(in) + H(+)(in). Its function is as follows. Mediates the uptake of pyruvate into mitochondria. This chain is Mitochondrial pyruvate carrier 1 (MPC1), found in Bos taurus (Bovine).